The primary structure comprises 63 residues: Conotoxin Cal12.5 (63 aa).

The first 21 residues, 1–21 (MKVTCVLVVLLLLLPYGDLLG), serve as a signal peptide directing secretion.

The protein belongs to the conotoxin O1 superfamily. Post-translationally, contains 4 disulfide bonds. In terms of tissue distribution, expressed by the venom duct.

The protein resides in the secreted. In terms of biological role, probable neurotoxin. The protein is Conotoxin Cal12.5 of Californiconus californicus (California cone).